A 1127-amino-acid polypeptide reads, in one-letter code: Caprin-2 (1127 aa).

The disordered stretch occupies residues 67–108 (YQSPSGHSEEEREGNMKSAKPQVNHSQHGESQRALSPLQSTL). A compositionally biased stretch (polar residues) spans 99–108 (RALSPLQSTL). Coiled-coil stretches lie at residues 129-156 (LKHKIRNIEKKKLKLEDYKDRLKSGEHL) and 194-216 (AQKKAQRREHMLKLEAEKKKLRT). 3 disordered regions span residues 382–614 (NKQG…KDPV), 642–753 (DKPS…SSSV), and 922–975 (QCYK…PVDV). Basic and acidic residues-rich tracts occupy residues 402–432 (KRWDMLTEPDGQEKKQESFKSWEASGKHQEV) and 440–464 (EQRKQDTSKLRSTLPEEQKKQEISK). Polar residues-rich tracts occupy residues 512-531 (PKSWTPSMQSEQNTTKSWTT) and 544-567 (TPKSWENNVESQKHSLTSQSQISP). The span at 588 to 597 (LNTEPKDVPK) shows a compositional bias: basic and acidic residues. Polar residues-rich tracts occupy residues 665 to 714 (KEQN…TSET) and 741 to 753 (QGFQSPPASSSSV). A phosphoserine mark is found at Ser-948 and Ser-949. Residues 956–970 (TFNSGDSGQGDSRSM) are compositionally biased toward polar residues. Positions 993–1127 (PQQMRVAFSA…TFSGYLLYQD (135 aa)) constitute a C1q domain. The Ca(2+) site is built by Asp-1078 and Glu-1084.

The protein belongs to the caprin family. In terms of assembly, homotrimer; via C1q domain. Found in a complex with LRP6, CCNY and CDK14 during G2/M stage; CAPRIN2 functions as a scaffold for the complex by binding to CCNY via its N terminus and to CDK14 via its C terminus. Interacts with LRP5. Interacts with LRP6. As to expression, detected in all tissues tested with highest levels of expression in brain and spleen.

The protein localises to the cytoplasm. It localises to the mitochondrion. Its subcellular location is the cell membrane. Its function is as follows. Promotes phosphorylation of the Wnt coreceptor LRP6, leading to increased activity of the canonical Wnt signaling pathway. Facilitates constitutive LRP6 phosphorylation by CDK14/CCNY during G2/M stage of the cell cycle, which may potentiate cells for Wnt signaling. May regulate the transport and translation of mRNAs, modulating for instance the expression of proteins involved in synaptic plasticity in neurons. Involved in regulation of growth as erythroblasts shift from a highly proliferative state towards their terminal phase of differentiation. May be involved in apoptosis. The sequence is that of Caprin-2 from Homo sapiens (Human).